The chain runs to 374 residues: MAKRDYYEVLGISRDADEKEIKRAYRKLAMKYHPDRNPDDKDAETKFKEASEAYEILADSSKRAAYDQFGHAGVDGQAGGGFGGGGASFSDIFGDVFGDIFGGGGRGRTTRGADLRYTLELDLEEAVKGKTVKINIPGHKECEACDGSGAEKGSRPETCGTCQGMGQVRMQQGFFTVQQACPTCRGSGQIIKNPCKSCHGQGRVRQEKTLSVKVPPGVDTGDRIRLSGEGEMGVDGGPPGDLYVQVAVREHSIFTRDGRNLYCEVPISIVDATLGGELEVPTLDGRVKLKIPPETQTGKLFRLRNKGVSPVRGGPAGDLLCRVIVETPVNLTKRQKELLEEFQQTLDGNNGTHHAPKKTSWFEGVKNFFDEMKF.

Residues 5–70 enclose the J domain; sequence DYYEVLGISR…SKRAAYDQFG (66 aa). Residues 129–207 form a CR-type zinc finger; that stretch reads GKTVKINIPG…CHGQGRVRQE (79 aa). Residues cysteine 142, cysteine 145, cysteine 159, cysteine 162, cysteine 181, cysteine 184, cysteine 195, and cysteine 198 each contribute to the Zn(2+) site. CXXCXGXG motif repeat units follow at residues 142-149, 159-166, 181-188, and 195-202; these read CEACDGSG, CGTCQGMG, CPTCRGSG, and CKSCHGQG. The interval 216–238 is disordered; it reads PGVDTGDRIRLSGEGEMGVDGGP.

The protein belongs to the DnaJ family. Homodimer. It depends on Zn(2+) as a cofactor.

It localises to the cytoplasm. Functionally, participates actively in the response to hyperosmotic and heat shock by preventing the aggregation of stress-denatured proteins and by disaggregating proteins, also in an autonomous, DnaK-independent fashion. Unfolded proteins bind initially to DnaJ; upon interaction with the DnaJ-bound protein, DnaK hydrolyzes its bound ATP, resulting in the formation of a stable complex. GrpE releases ADP from DnaK; ATP binding to DnaK triggers the release of the substrate protein, thus completing the reaction cycle. Several rounds of ATP-dependent interactions between DnaJ, DnaK and GrpE are required for fully efficient folding. Also involved, together with DnaK and GrpE, in the DNA replication of plasmids through activation of initiation proteins. The chain is Chaperone protein DnaJ from Marinobacter nauticus (strain ATCC 700491 / DSM 11845 / VT8) (Marinobacter aquaeolei).